Here is a 251-residue protein sequence, read N- to C-terminus: Cell division protein ZapD (251 aa).

This sequence belongs to the ZapD family. Interacts with FtsZ.

It is found in the cytoplasm. Cell division factor that enhances FtsZ-ring assembly. Directly interacts with FtsZ and promotes bundling of FtsZ protofilaments, with a reduction in FtsZ GTPase activity. This Burkholderia thailandensis (strain ATCC 700388 / DSM 13276 / CCUG 48851 / CIP 106301 / E264) protein is Cell division protein ZapD.